Here is a 318-residue protein sequence, read N- to C-terminus: Transaldolase (318 aa).

Catalysis depends on K126, which acts as the Schiff-base intermediate with substrate.

This sequence belongs to the transaldolase family. Type 1 subfamily. As to quaternary structure, homodimer.

The protein resides in the cytoplasm. The enzyme catalyses D-sedoheptulose 7-phosphate + D-glyceraldehyde 3-phosphate = D-erythrose 4-phosphate + beta-D-fructose 6-phosphate. Its pathway is carbohydrate degradation; pentose phosphate pathway; D-glyceraldehyde 3-phosphate and beta-D-fructose 6-phosphate from D-ribose 5-phosphate and D-xylulose 5-phosphate (non-oxidative stage): step 2/3. Functionally, transaldolase is important for the balance of metabolites in the pentose-phosphate pathway. The chain is Transaldolase from Cupriavidus metallidurans (strain ATCC 43123 / DSM 2839 / NBRC 102507 / CH34) (Ralstonia metallidurans).